A 175-amino-acid polypeptide reads, in one-letter code: uncharacterized protein (175 aa).

Disordered regions lie at residues 1 to 32 (MSHK…KLRH) and 156 to 175 (KQKQ…KYRQ). The segment covering 14–24 (LLSSSSPVAKK) has biased composition (low complexity).

This is an uncharacterized protein from Mycoplasma pneumoniae (strain ATCC 29342 / M129 / Subtype 1) (Mycoplasmoides pneumoniae).